The sequence spans 72 residues: Large ribosomal subunit protein bL28 (72 aa).

Belongs to the bacterial ribosomal protein bL28 family.

This is Large ribosomal subunit protein bL28 from Chlorobium chlorochromatii (strain CaD3).